Reading from the N-terminus, the 283-residue chain is 4-diphosphocytidyl-2-C-methyl-D-erythritol kinase (283 aa).

The active site involves lysine 10. 99–109 serves as a coordination point for ATP; sequence PMGGGLGGGSS. Aspartate 141 is an active-site residue.

Belongs to the GHMP kinase family. IspE subfamily. Homodimer.

The enzyme catalyses 4-CDP-2-C-methyl-D-erythritol + ATP = 4-CDP-2-C-methyl-D-erythritol 2-phosphate + ADP + H(+). The protein operates within isoprenoid biosynthesis; isopentenyl diphosphate biosynthesis via DXP pathway; isopentenyl diphosphate from 1-deoxy-D-xylulose 5-phosphate: step 3/6. Functionally, catalyzes the phosphorylation of the position 2 hydroxy group of 4-diphosphocytidyl-2C-methyl-D-erythritol. The chain is 4-diphosphocytidyl-2-C-methyl-D-erythritol kinase from Shigella boydii serotype 18 (strain CDC 3083-94 / BS512).